A 164-amino-acid chain; its full sequence is Cytochrome c-type biogenesis protein CcmE (164 aa).

Residues 1–8 lie on the Cytoplasmic side of the membrane; the sequence is MNPRRKSR. Residues 9–29 traverse the membrane as a helical; Signal-anchor for type II membrane protein segment; that stretch reads LYLAVVVLIGIGLTTTLVLYA. The Periplasmic portion of the chain corresponds to 30–164; sequence LRSNIDLFYT…NSTAAQGNAS (135 aa). Positions 130 and 134 each coordinate heme. Basic and acidic residues predominate over residues 131–150; it reads DEKYTPPEVKEAMKENHTRP. Residues 131–164 form a disordered region; sequence DEKYTPPEVKEAMKENHTRPAEAYNSTAAQGNAS. The segment covering 154–164 has biased composition (polar residues); the sequence is YNSTAAQGNAS.

The protein belongs to the CcmE/CycJ family.

It localises to the cell inner membrane. Functionally, heme chaperone required for the biogenesis of c-type cytochromes. Transiently binds heme delivered by CcmC and transfers the heme to apo-cytochromes in a process facilitated by CcmF and CcmH. This Yersinia enterocolitica serotype O:8 / biotype 1B (strain NCTC 13174 / 8081) protein is Cytochrome c-type biogenesis protein CcmE.